The chain runs to 299 residues: Pyridoxal 5'-phosphate synthase subunit PdxS (299 aa).

D-ribose 5-phosphate is bound at residue aspartate 24. Lysine 81 functions as the Schiff-base intermediate with D-ribose 5-phosphate in the catalytic mechanism. A D-ribose 5-phosphate-binding site is contributed by glycine 153. A D-glyceraldehyde 3-phosphate-binding site is contributed by arginine 165. Residues glycine 219 and 240–241 (GS) each bind D-ribose 5-phosphate.

This sequence belongs to the PdxS/SNZ family. As to quaternary structure, in the presence of PdxT, forms a dodecamer of heterodimers.

It carries out the reaction aldehydo-D-ribose 5-phosphate + D-glyceraldehyde 3-phosphate + L-glutamine = pyridoxal 5'-phosphate + L-glutamate + phosphate + 3 H2O + H(+). The protein operates within cofactor biosynthesis; pyridoxal 5'-phosphate biosynthesis. Functionally, catalyzes the formation of pyridoxal 5'-phosphate from ribose 5-phosphate (RBP), glyceraldehyde 3-phosphate (G3P) and ammonia. The ammonia is provided by the PdxT subunit. Can also use ribulose 5-phosphate and dihydroxyacetone phosphate as substrates, resulting from enzyme-catalyzed isomerization of RBP and G3P, respectively. In Methanococcus maripaludis (strain C7 / ATCC BAA-1331), this protein is Pyridoxal 5'-phosphate synthase subunit PdxS.